Consider the following 528-residue polypeptide: uncharacterized protein (528 aa).

Basic residues-rich tracts occupy residues 1-16 and 25-43; these read MGKA…KNHL and QLAR…SHTK. Positions 1–59 are disordered; it reads MGKASKATKKFTKNHLKNTIERRKQLARSKKVYGTKNRNSHTKNKLESGTNDNNKNKED.

It belongs to the NOC2 family.

It is found in the nucleus. It localises to the nucleolus. This is an uncharacterized protein from Schizosaccharomyces pombe (strain 972 / ATCC 24843) (Fission yeast).